Here is a 131-residue protein sequence, read N- to C-terminus: Small ribosomal subunit protein eS8 (131 aa).

The tract at residues M1–Q37 is disordered. Residues S16–A30 show a composition bias toward basic residues.

The protein belongs to the eukaryotic ribosomal protein eS8 family. As to quaternary structure, part of the 30S ribosomal subunit.

The polypeptide is Small ribosomal subunit protein eS8 (Pyrobaculum neutrophilum (strain DSM 2338 / JCM 9278 / NBRC 100436 / V24Sta) (Thermoproteus neutrophilus)).